Consider the following 308-residue polypeptide: Ribosomal RNA large subunit methyltransferase F (308 aa).

It belongs to the methyltransferase superfamily. METTL16/RlmF family.

Its subcellular location is the cytoplasm. It carries out the reaction adenosine(1618) in 23S rRNA + S-adenosyl-L-methionine = N(6)-methyladenosine(1618) in 23S rRNA + S-adenosyl-L-homocysteine + H(+). In terms of biological role, specifically methylates the adenine in position 1618 of 23S rRNA. In Salmonella paratyphi A (strain ATCC 9150 / SARB42), this protein is Ribosomal RNA large subunit methyltransferase F.